A 108-amino-acid chain; its full sequence is NADH dehydrogenase [ubiquinone] flavoprotein 3, mitochondrial (108 aa).

The transit peptide at 1-34 (MAASCLLRQGRAGALKTMLQEAQVFRGLASTVSL) directs the protein to the mitochondrion. Positions 33–72 (SLSAESGKSEKGQPQNSKKQSPPKKPAPVPAEPFDNSTYK) are disordered. S105 bears the Phosphoserine mark.

The protein belongs to the complex I NDUFV3 subunit family. Complex I is composed of 45 different subunits. This is a component of the flavoprotein-sulfur (FP) fragment of the enzyme.

It is found in the mitochondrion inner membrane. Functionally, accessory subunit of the mitochondrial membrane respiratory chain NADH dehydrogenase (Complex I), that is believed not to be involved in catalysis. Complex I functions in the transfer of electrons from NADH to the respiratory chain. The immediate electron acceptor for the enzyme is believed to be ubiquinone. May be the terminally assembled subunit of Complex I. This chain is NADH dehydrogenase [ubiquinone] flavoprotein 3, mitochondrial (NDUFV3), found in Gorilla gorilla gorilla (Western lowland gorilla).